A 347-amino-acid polypeptide reads, in one-letter code: Probable arabinogalactan endo-beta-1,4-galactanase A (347 aa).

Residues 1 to 16 (MLFSYLLATLPLLANA) form the signal peptide. E150 acts as the Proton donor in catalysis. E260 functions as the Nucleophile in the catalytic mechanism.

Belongs to the glycosyl hydrolase 53 family.

It localises to the secreted. The catalysed reaction is The enzyme specifically hydrolyzes (1-&gt;4)-beta-D-galactosidic linkages in type I arabinogalactans.. Functionally, endogalactanase involved in the degradation of plant cell wall polysaccharides, and more particularly of hairy regions of pectin. The chain is Probable arabinogalactan endo-beta-1,4-galactanase A (galA) from Aspergillus flavus (strain ATCC 200026 / FGSC A1120 / IAM 13836 / NRRL 3357 / JCM 12722 / SRRC 167).